An 842-amino-acid polypeptide reads, in one-letter code: CRM-domain containing factor CFM3, chloroplastic/mitochondrial (842 aa).

The transit peptide at 1–82 (MAMASSPACH…RSSGRSTMSL (82 aa)) directs the protein to the chloroplast and mitochondrion. Disordered stretches follow at residues 49-80 (AALDLRPEPSPSSDSDDEDAVGASRSSGRSTM), 141-160 (RFPWERPMPPPEAAPRSARS), and 254-290 (VDYDEPEPTKKSKKNSQSLAMDFPIKGSSNPSLLPTE). Residues 167 to 263 (LTLPAAELRR…VDYDEPEPTK (97 aa)) form the CRM 1 domain. The span at 280-290 (GSSNPSLLPTE) shows a compositional bias: polar residues. 2 CRM domains span residues 371-468 (PSLS…ELAE) and 582-682 (ETIT…SSLR). Residues 703 to 732 (QALSRHFAKLNRKVERLKAELVQMEDVKEQ) are a coiled coil. The interval 768–842 (VAGATADDDG…DRRNHDVNEY (75 aa)) is disordered. A compositionally biased stretch (acidic residues) spans 786–812 (DEADYPDSDDEAGDCSEDEGEDDEDEA). Residues 831–842 (DTDRRNHDVNEY) are compositionally biased toward basic and acidic residues.

In terms of assembly, interacts with RNA. Part of large ribonucleo-protein particles that contain CAF1 and/or CAF2, and RNC1.

Its subcellular location is the plastid. It is found in the chloroplast stroma. The protein localises to the mitochondrion. In terms of biological role, binds specific group II introns in chloroplasts and facilitates their splicing. Acts on subgroup IIB introns. The substrates of the subgroup IIB also require the CRM domain proteins CAF1 or CAF2, with a simultaneous binding of CFM3 and CAF1 or CAF2. May influence the biogenesis of the mitochondrial small ribosomal subunit. This chain is CRM-domain containing factor CFM3, chloroplastic/mitochondrial, found in Zea mays (Maize).